A 525-amino-acid polypeptide reads, in one-letter code: Lysine--tRNA ligase (525 aa).

The short motif at 40-48 is the 'HIGH' region element; it reads ASGIPHMGS. The 'KMSKS' region signature appears at 295–299; sequence KISKS. Lys298 is a binding site for ATP.

The protein belongs to the class-I aminoacyl-tRNA synthetase family.

Its subcellular location is the cytoplasm. It catalyses the reaction tRNA(Lys) + L-lysine + ATP = L-lysyl-tRNA(Lys) + AMP + diphosphate. The protein is Lysine--tRNA ligase (lysS) of Cenarchaeum symbiosum (strain A).